The following is a 551-amino-acid chain: MSHILRAAVLAAVLLPFPALADQAGKSPAGVRYHGGDEIILQGFHWNVVREAPNDWYNILRQQASTIAADGFSAIWMPVPWRDFSSWTDGGKSGGGEGYFWHDFNKNGRYGSDAQLRQAAGALGGAGVKVLYDVVPNHMNRGYPDKEINLPAGQGFWRNDCADPGNYPNDCDDGDRFIGGESDLNTGHPQIYGMFRDELANLRSGYGAGGFRFDFVRGYAPERVDSWMSDSADSSFCVGELWKGPSEYPSWDWRNTASWQQIIKDWSDRAKCPVFDFALKERMQNGSVADWKHGLNGNPDPRWREVAVTFVDNHDTGYSPGQNGGQHHWALQDGLIRQAYAYILTSPGTPVVYWSHMYDWGYGDFIRQLIQVRRTAGVRADSAISFHSGYSGLVATVSGSQQTLVVALNSDLANPGQVASGSFSEAVNASNGQVRVWRSGSGDGGGNDGGEGGLVNVNFRCDNGVTQMGDSVYAVGNVSQLGNWSPASAVRLTDTSSYPTWKGSIALPDGQNVEWKCLIRNEADATLVRQWQSGGNNQVQAAAGASTSGSF.

The first 21 residues, 1 to 21 (MSHILRAAVLAAVLLPFPALA), serve as a signal peptide directing secretion. Aspartate 22, glutamine 23, histidine 34, aspartate 37, and glutamate 38 together coordinate Ca(2+). Residue 99 to 100 (YF) participates in substrate binding. Ca(2+) is bound at residue asparagine 137. Residue histidine 138 participates in substrate binding. Cysteine 161 and cysteine 171 are oxidised to a cystine. Ca(2+) is bound by residues aspartate 172 and aspartate 175. 177 to 181 (FIGGE) is a substrate binding site. Aspartate 183 provides a ligand contact to Ca(2+). Residue arginine 212 participates in substrate binding. The active-site Nucleophile is the aspartate 214. Ca(2+) is bound at residue glycine 218. A disulfide bridge links cysteine 237 with cysteine 272. Glutamate 240 acts as the Proton donor in catalysis. Positions 314 and 326 each coordinate substrate. The CBM20 domain occupies 449 to 551 (GGEGGLVNVN…AAGASTSGSF (103 aa)).

The protein belongs to the glycosyl hydrolase 13 family. Monomer. Ca(2+) is required as a cofactor.

It localises to the secreted. The catalysed reaction is Hydrolysis of (1-&gt;4)-alpha-D-glucosidic linkages in amylaceous polysaccharides, to remove successive maltotetraose residues from the non-reducing chain ends.. The protein operates within glycan degradation; starch degradation. The polypeptide is Glucan 1,4-alpha-maltotetraohydrolase (mta) (Roseateles saccharophilus (Pseudomonas saccharophila)).